Consider the following 1036-residue polypeptide: Chitin synthase 1 (1036 aa).

Residues 1 to 10 (MDGPPSPTRV) show a composition bias toward pro residues. Positions 1–153 (MDGPPSPTRV…RRPLPPAPLF (153 aa)) are disordered. A glycan (N-linked (GlcNAc...) asparagine) is linked at asparagine 38. Residues 86–108 (PSIPLSSSNPRSPIRPSTPSRVS) are compositionally biased toward low complexity. Residue asparagine 179 is glycosylated (N-linked (GlcNAc...) asparagine). The segment at 189 to 229 (RASLKSAHSYTTDSTFTEDDDITNEKLNHYGPAPEGRQDRR) is disordered. A compositionally biased stretch (polar residues) spans 194–203 (SAHSYTTDST). The next 7 membrane-spanning stretches (helical) occupy residues 659–679 (FISLLFTFFSLANFYLTFYFV), 699–719 (IFVILRYVCVLLICLQFILSL), 733–753 (TMVTYSIIMAYTTFASVYIVI), 776–796 (IFTNLIVSSVSTIGLFFLMSF), 808–828 (SAQYFALLPSYICTLQVYAFC), 908–928 (YVVASYMVCNAILAMAVSEAY), and 945–967 (WSVAALALFRAIGSSAFGVINIV). The disordered stretch occupies residues 994 to 1019 (AGLGSGFSESGKTGITSGSGMSGMSL). The span at 1001-1019 (SESGKTGITSGSGMSGMSL) shows a compositional bias: low complexity.

The protein belongs to the chitin synthase family. Class II subfamily.

The protein resides in the cell membrane. The enzyme catalyses [(1-&gt;4)-N-acetyl-beta-D-glucosaminyl](n) + UDP-N-acetyl-alpha-D-glucosamine = [(1-&gt;4)-N-acetyl-beta-D-glucosaminyl](n+1) + UDP + H(+). In terms of biological role, polymerizes chitin, a structural polymer of the cell wall and septum, by transferring the sugar moiety of UDP-GlcNAc to the non-reducing end of the growing chitin polymer. CHS1 mainly responsible for normal yeast cell reproductive growth. The sequence is that of Chitin synthase 1 from Exophiala dermatitidis (strain ATCC 34100 / CBS 525.76 / NIH/UT8656) (Black yeast).